A 567-amino-acid chain; its full sequence is 2-succinyl-5-enolpyruvyl-6-hydroxy-3-cyclohexene-1-carboxylate synthase (567 aa).

Belongs to the TPP enzyme family. MenD subfamily. Homodimer. Mg(2+) is required as a cofactor. The cofactor is Mn(2+). Thiamine diphosphate serves as cofactor.

The catalysed reaction is isochorismate + 2-oxoglutarate + H(+) = 5-enolpyruvoyl-6-hydroxy-2-succinyl-cyclohex-3-ene-1-carboxylate + CO2. It functions in the pathway quinol/quinone metabolism; 1,4-dihydroxy-2-naphthoate biosynthesis; 1,4-dihydroxy-2-naphthoate from chorismate: step 2/7. Its pathway is quinol/quinone metabolism; menaquinone biosynthesis. Catalyzes the thiamine diphosphate-dependent decarboxylation of 2-oxoglutarate and the subsequent addition of the resulting succinic semialdehyde-thiamine pyrophosphate anion to isochorismate to yield 2-succinyl-5-enolpyruvyl-6-hydroxy-3-cyclohexene-1-carboxylate (SEPHCHC). The polypeptide is 2-succinyl-5-enolpyruvyl-6-hydroxy-3-cyclohexene-1-carboxylate synthase (Yersinia pseudotuberculosis serotype I (strain IP32953)).